The primary structure comprises 1147 residues: Disease resistance protein RPP4 (1147 aa).

One can recognise a TIR domain in the interval 11–175 (RRYDVFPSFS…KIANDVSNKL (165 aa)). Residue Glu86 is part of the active site. The NB-ARC domain maps to 189–446 (EDHIKAIKSI…CFFNGFKVSN (258 aa)). 18 LRR repeats span residues 548–573 (MRNL…LWSK), 584–606 (PLKL…TFKA), 608–629 (YLVN…TLPL), 630–653 (GSLK…SLAI), 655–676 (LEEL…IQNA), 698–721 (MCNL…IYLP), 722–743 (RKLK…NFKA), 744–766 (EYLV…TQPL), 767–790 (GSLK…SLAI), 792–813 (LERL…IQNA), 814–836 (TKLI…DLNL), 837–860 (ESLE…KMGC), 926–950 (LGSL…SKAT), 952–973 (LKRL…IGNL), 974–996 (HRLV…DVNL), 997–1017 (SSLI…PLIS), 1018–1042 (TRIE…DLTR), and 1044–1064 (SVLL…IFRL).

In terms of assembly, interacts with RSH1.

The catalysed reaction is NAD(+) + H2O = ADP-D-ribose + nicotinamide + H(+). Its function is as follows. TIR-NB-LRR receptor-like protein that confers resistance to the pathogen Hyaloperonospora arabidopsis isolates Emoy2 and Emwa1 (downy mildew disease). Plays a role in the regulation of temperature response during plant growth and survival. In Arabidopsis thaliana (Mouse-ear cress), this protein is Disease resistance protein RPP4.